The primary structure comprises 287 residues: Large ribosomal subunit protein uL2 (287 aa).

The disordered stretch occupies residues 214–287 (LGRRPEVRGS…SKRGRGGRDA (74 aa)). The segment covering 271 to 287 (QRRRRKSSKRGRGGRDA) has biased composition (basic residues).

Belongs to the universal ribosomal protein uL2 family. Part of the 50S ribosomal subunit. Forms a bridge to the 30S subunit in the 70S ribosome.

Its function is as follows. One of the primary rRNA binding proteins. Required for association of the 30S and 50S subunits to form the 70S ribosome, for tRNA binding and peptide bond formation. It has been suggested to have peptidyltransferase activity; this is somewhat controversial. Makes several contacts with the 16S rRNA in the 70S ribosome. The polypeptide is Large ribosomal subunit protein uL2 (Synechococcus elongatus (strain ATCC 33912 / PCC 7942 / FACHB-805) (Anacystis nidulans R2)).